The following is a 331-amino-acid chain: (E)-beta farnesene synthase MBR_03882 (331 aa).

Belongs to the trichodiene synthase family.

The enzyme catalyses (2E,6E)-farnesyl diphosphate = (E)-beta-farnesene + diphosphate. Its function is as follows. Terpene synthase that catalyzes the conversion of (2E,6E)-farnesyl diphosphate (FPP) into the volatile sesquiterpene (E)-beta-farnesene. The sequence is that of (E)-beta farnesene synthase MBR_03882 from Metarhizium brunneum (strain ARSEF 3297).